Consider the following 252-residue polypeptide: Phosphate import ATP-binding protein PstB (252 aa).

Residues 6–247 (ITINNLNFYY…PRDKRTEDYI (242 aa)) enclose the ABC transporter domain. 38 to 45 (GPSGCGKS) serves as a coordination point for ATP.

It belongs to the ABC transporter superfamily. Phosphate importer (TC 3.A.1.7) family. As to quaternary structure, the complex is composed of two ATP-binding proteins (PstB), two transmembrane proteins (PstC and PstA) and a solute-binding protein (PstS).

It is found in the cell membrane. The catalysed reaction is phosphate(out) + ATP + H2O = ADP + 2 phosphate(in) + H(+). Functionally, part of the ABC transporter complex PstSACB involved in phosphate import. Responsible for energy coupling to the transport system. This Moorella thermoacetica (strain ATCC 39073 / JCM 9320) protein is Phosphate import ATP-binding protein PstB.